Here is a 187-residue protein sequence, read N- to C-terminus: uncharacterized protein (187 aa).

Positions 1–95 (MTTMKRSADP…GSTRPSARYG (95 aa)) are disordered. Over residues 46–80 (RARRSRGPKRFLGKRNYRRARARKPGKRDRAHSSK) the composition is skewed to basic residues.

Its subcellular location is the mitochondrion. This is an uncharacterized protein from Arabidopsis thaliana (Mouse-ear cress).